A 206-amino-acid chain; its full sequence is Ribosomal RNA small subunit methyltransferase G (206 aa).

S-adenosyl-L-methionine-binding positions include glycine 74, leucine 79, 125 to 126 (VE), and arginine 140.

This sequence belongs to the methyltransferase superfamily. RNA methyltransferase RsmG family.

Its subcellular location is the cytoplasm. It carries out the reaction guanosine(527) in 16S rRNA + S-adenosyl-L-methionine = N(7)-methylguanosine(527) in 16S rRNA + S-adenosyl-L-homocysteine. Its function is as follows. Specifically methylates the N7 position of guanine in position 527 of 16S rRNA. The polypeptide is Ribosomal RNA small subunit methyltransferase G (Shewanella amazonensis (strain ATCC BAA-1098 / SB2B)).